We begin with the raw amino-acid sequence, 296 residues long: MSLRGKDIISISDIKRSDLERIFRVASSRFQGDELKGKIIAMAFFEPSTRTRFSFETATLRLGGNYIGFEAAQSTSLAKGESFSDTIRMLDSYADGIVVRHSLEGAAKLAAELAEAPVINAGDGTKNHPTQAMIDLYTIWKERGNLDNLTYGVLGDLRYGRAAASFLKALNLYSPKKVYLICPEGLRPKQELLDSLKMPWEFSDLKDALPELDVLYVTRVQKERFPDPSEYERVKGSYKVDSSILKDAKEGLMILHPLPRVDEISLDVDSTPYAYYFKQAANGVPVRMALLSEVIP.

The carbamoyl phosphate site is built by arginine 50 and threonine 51. An L-aspartate-binding site is contributed by lysine 79. 3 residues coordinate carbamoyl phosphate: arginine 100, histidine 128, and glutamine 131. L-aspartate-binding residues include arginine 161 and arginine 219. Residues leucine 258 and proline 259 each coordinate carbamoyl phosphate.

Belongs to the aspartate/ornithine carbamoyltransferase superfamily. ATCase family. Heterooligomer of catalytic and regulatory chains.

It catalyses the reaction carbamoyl phosphate + L-aspartate = N-carbamoyl-L-aspartate + phosphate + H(+). It functions in the pathway pyrimidine metabolism; UMP biosynthesis via de novo pathway; (S)-dihydroorotate from bicarbonate: step 2/3. Its function is as follows. Catalyzes the condensation of carbamoyl phosphate and aspartate to form carbamoyl aspartate and inorganic phosphate, the committed step in the de novo pyrimidine nucleotide biosynthesis pathway. This chain is Aspartate carbamoyltransferase catalytic subunit, found in Korarchaeum cryptofilum (strain OPF8).